A 1347-amino-acid polypeptide reads, in one-letter code: G-protein coupled receptor-associated sorting protein 1 (1347 aa).

3 disordered regions span residues 1–75, 145–174, and 188–281; these read MTRA…AYAK, ESIP…SWYR, and DFKW…NSRS. Residues 21–33 are compositionally biased toward low complexity; it reads ENANAAEVEPEAP. The span at 211–226 shows a compositional bias: basic residues; it reads FRPRKSMKANNRFRHM. A compositionally biased stretch (basic and acidic residues) spans 263-278; that stretch reads PKDKTKVWSKPKEEPN. Position 295 is a phosphoserine (Ser295). Disordered regions lie at residues 310–344, 364–396, and 460–485; these read GEEA…AMSG, FSKS…QEAR, and QVSS…SKSM. Residues 316–325 are compositionally biased toward basic residues; sequence RSKPRARKGV. Positions 370-396 are enriched in basic and acidic residues; that stretch reads KKEPRTRAVPKEEVKTKARASTKQEAR. Over residues 461-484 the composition is skewed to polar residues; it reads VSSFCLGSGKKSSMESGPKATSKS. Phosphoserine occurs at positions 619 and 626. Thr860 carries the post-translational modification Phosphothreonine. Phosphoserine is present on Ser862.

The protein belongs to the GPRASP family. As to quaternary structure, interacts with cytoplasmic tails of a variety of G-protein coupled receptors such as delta opioid receptor/OPRD1, beta-2 adrenergic receptor/ADRB2 and D4 dopamine receptor/DRD4 as well as D2 dopamine receptor/DRD2. Interacts with PER1. Interacts with BECN2; the interaction is direct. In terms of tissue distribution, expressed in the brain, with higher expression in the hippocampus, hypothalamus and olfactory bulb.

The protein resides in the cytoplasm. Its function is as follows. Modulates lysosomal sorting and functional down-regulation of a variety of G-protein coupled receptors. Targets receptors for degradation in lysosomes via its interaction with BECN2. The polypeptide is G-protein coupled receptor-associated sorting protein 1 (Gprasp1) (Mus musculus (Mouse)).